An 864-amino-acid polypeptide reads, in one-letter code: Alanine--tRNA ligase (864 aa).

4 residues coordinate Zn(2+): histidine 553, histidine 557, cysteine 655, and histidine 659. The segment at 828 to 847 (VGGKGGGRPDMAQAGGKDPS) is disordered.

This sequence belongs to the class-II aminoacyl-tRNA synthetase family. Requires Zn(2+) as cofactor.

It is found in the cytoplasm. The enzyme catalyses tRNA(Ala) + L-alanine + ATP = L-alanyl-tRNA(Ala) + AMP + diphosphate. Functionally, catalyzes the attachment of alanine to tRNA(Ala) in a two-step reaction: alanine is first activated by ATP to form Ala-AMP and then transferred to the acceptor end of tRNA(Ala). Also edits incorrectly charged Ser-tRNA(Ala) and Gly-tRNA(Ala) via its editing domain. The polypeptide is Alanine--tRNA ligase (Hydrogenovibrio crunogenus (strain DSM 25203 / XCL-2) (Thiomicrospira crunogena)).